Consider the following 352-residue polypeptide: Ion-translocating oxidoreductase complex subunit D (352 aa).

Transmembrane regions (helical) follow at residues 20–40 (IMLL…WFFG), 42–62 (GTLV…ALVL), 78–109 (ALLT…VIIA), 123–143 (PAMI…TSWL), and 148–168 (IAVN…GHIT). Position 187 is an FMN phosphoryl threonine (Thr-187). A run of 5 helical transmembrane segments spans residues 215–235 (LAGV…VWLL), 242–262 (WHIP…GWLF), 267–287 (LAAP…FFIL), 301–321 (LIFG…GGYP), and 322–342 (DGVA…DYYT).

It belongs to the NqrB/RnfD family. The complex is composed of six subunits: RsxA, RsxB, RsxC, RsxD, RsxE and RsxG. Requires FMN as cofactor.

The protein localises to the cell inner membrane. In terms of biological role, part of a membrane-bound complex that couples electron transfer with translocation of ions across the membrane. Required to maintain the reduced state of SoxR. This Escherichia coli (strain SMS-3-5 / SECEC) protein is Ion-translocating oxidoreductase complex subunit D.